The sequence spans 494 residues: Lysine--tRNA ligase (494 aa).

Residues glutamate 407 and glutamate 414 each coordinate Mg(2+).

This sequence belongs to the class-II aminoacyl-tRNA synthetase family. In terms of assembly, homodimer. Mg(2+) serves as cofactor.

Its subcellular location is the cytoplasm. The catalysed reaction is tRNA(Lys) + L-lysine + ATP = L-lysyl-tRNA(Lys) + AMP + diphosphate. The sequence is that of Lysine--tRNA ligase from Lactococcus lactis subsp. cremoris (strain SK11).